The sequence spans 126 residues: Major sperm protein 1 (126 aa).

The residue at position 2 (A2) is an N-acetylalanine. Residues 8-125 (DIATMPAQKV…RRKNLPIEYN (118 aa)) enclose the MSP domain.

As to expression, sperm.

It is found in the cell projection. The protein localises to the pseudopodium. It localises to the cytoplasm. Its subcellular location is the cytoskeleton. In terms of biological role, central component in molecular interactions underlying sperm crawling. Forms an extensive filament system that extends from sperm villipoda, along the leading edge of the pseudopod. In Globodera rostochiensis (Golden nematode worm), this protein is Major sperm protein 1 (MSP-1).